A 248-amino-acid chain; its full sequence is Pyridoxine 5'-phosphate synthase (248 aa).

Asn-10 provides a ligand contact to 3-amino-2-oxopropyl phosphate. 12-13 (DH) contributes to the 1-deoxy-D-xylulose 5-phosphate binding site. Residue Arg-21 participates in 3-amino-2-oxopropyl phosphate binding. The active-site Proton acceptor is His-46. 1-deoxy-D-xylulose 5-phosphate-binding residues include Arg-48 and His-53. Glu-73 acts as the Proton acceptor in catalysis. Position 103 (Thr-103) interacts with 1-deoxy-D-xylulose 5-phosphate. His-194 acts as the Proton donor in catalysis. Residues Gly-195 and 216–217 (GH) each bind 3-amino-2-oxopropyl phosphate.

It belongs to the PNP synthase family. In terms of assembly, homooctamer; tetramer of dimers.

Its subcellular location is the cytoplasm. The catalysed reaction is 3-amino-2-oxopropyl phosphate + 1-deoxy-D-xylulose 5-phosphate = pyridoxine 5'-phosphate + phosphate + 2 H2O + H(+). It functions in the pathway cofactor biosynthesis; pyridoxine 5'-phosphate biosynthesis; pyridoxine 5'-phosphate from D-erythrose 4-phosphate: step 5/5. Functionally, catalyzes the complicated ring closure reaction between the two acyclic compounds 1-deoxy-D-xylulose-5-phosphate (DXP) and 3-amino-2-oxopropyl phosphate (1-amino-acetone-3-phosphate or AAP) to form pyridoxine 5'-phosphate (PNP) and inorganic phosphate. The sequence is that of Pyridoxine 5'-phosphate synthase from Legionella pneumophila (strain Corby).